Here is a 61-residue protein sequence, read N- to C-terminus: Large ribosomal subunit protein bL28 (61 aa).

Residues 1 to 24 (MAKDYVTGKKTTFGNKRSHSLNPT) are disordered. Positions 9-23 (KKTTFGNKRSHSLNP) are enriched in polar residues.

Belongs to the bacterial ribosomal protein bL28 family.

The sequence is that of Large ribosomal subunit protein bL28 from Lactobacillus acidophilus (strain ATCC 700396 / NCK56 / N2 / NCFM).